A 309-amino-acid polypeptide reads, in one-letter code: Malate dehydrogenase (309 aa).

NAD(+) is bound by residues 8–13 and aspartate 33; that span reads GAGLVG. The substrate site is built by arginine 82 and arginine 88. NAD(+) is bound by residues asparagine 95 and 118–120; that span reads VSN. Substrate is bound by residues asparagine 120 and arginine 151. Histidine 175 (proton acceptor) is an active-site residue.

It belongs to the LDH/MDH superfamily. MDH type 3 family.

It carries out the reaction (S)-malate + NAD(+) = oxaloacetate + NADH + H(+). Functionally, catalyzes the reversible oxidation of malate to oxaloacetate. The polypeptide is Malate dehydrogenase (Pseudomonas putida (strain GB-1)).